The chain runs to 552 residues: Esterase E4 (552 aa).

The signal sequence occupies residues 1 to 23 (MKNTCGILLNLFLFIGCFLTCSA). Asparagine 81 is a glycosylation site (N-linked (GlcNAc...) asparagine). Residues cysteine 89 and cysteine 106 are joined by a disulfide bond. Serine 214 functions as the Acyl-ester intermediate in the catalytic mechanism. A disulfide bridge links cysteine 266 with cysteine 277. Asparagine 269 carries an N-linked (GlcNAc...) asparagine glycan. The active-site Charge relay system is the glutamate 339. N-linked (GlcNAc...) asparagine glycans are attached at residues asparagine 371, asparagine 404, and asparagine 443. The active-site Charge relay system is histidine 463.

The protein belongs to the type-B carboxylesterase/lipase family.

It carries out the reaction a carboxylic ester + H2O = an alcohol + a carboxylate + H(+). Overproduction of nonspecific esterases is a common mechanism of resistance to organophosphate insecticides. This chain is Esterase E4, found in Myzus persicae (Green peach aphid).